A 247-amino-acid polypeptide reads, in one-letter code: Adenosylcobinamide-GDP ribazoletransferase (247 aa).

The next 5 helical transmembrane spans lie at 34 to 54 (IVMFPLIGAILGGLSGLIFIL), 59 to 79 (CGIPLAALFCILALALLTGGF), 113 to 133 (GGLALIFVLLAKILVVSELAL), 138 to 158 (VLAALAAACAAGRGSAALLMY), and 194 to 214 (VLLPGMQGLAAIVITLAAIFI).

Belongs to the CobS family. It depends on Mg(2+) as a cofactor.

The protein resides in the cell inner membrane. The catalysed reaction is alpha-ribazole + adenosylcob(III)inamide-GDP = adenosylcob(III)alamin + GMP + H(+). It catalyses the reaction alpha-ribazole 5'-phosphate + adenosylcob(III)inamide-GDP = adenosylcob(III)alamin 5'-phosphate + GMP + H(+). Its pathway is cofactor biosynthesis; adenosylcobalamin biosynthesis; adenosylcobalamin from cob(II)yrinate a,c-diamide: step 7/7. Its function is as follows. Joins adenosylcobinamide-GDP and alpha-ribazole to generate adenosylcobalamin (Ado-cobalamin). Also synthesizes adenosylcobalamin 5'-phosphate from adenosylcobinamide-GDP and alpha-ribazole 5'-phosphate. This Salmonella arizonae (strain ATCC BAA-731 / CDC346-86 / RSK2980) protein is Adenosylcobinamide-GDP ribazoletransferase.